Reading from the N-terminus, the 92-residue chain is Protein RnfH (92 aa).

The protein belongs to the UPF0125 (RnfH) family.

This chain is Protein RnfH, found in Neisseria gonorrhoeae (strain NCCP11945).